A 61-amino-acid polypeptide reads, in one-letter code: Large ribosomal subunit protein bL32 (61 aa).

The protein belongs to the bacterial ribosomal protein bL32 family.

The polypeptide is Large ribosomal subunit protein bL32 (Hyphomonas neptunium (strain ATCC 15444)).